The primary structure comprises 442 residues: MQPPPSLCGRALVALVLACGLSRIWGEERGFPPDRATPLLQTAEIMTPPTKTLWPKGSNASLARSLAPAEVPKGDRTAGSPPRTISPPPCEGSIEIKETFKYINTVVSCLVFVLGIIGNSTLLRIIYKNKCMRNGPNILIASLALGDLLHIIIDIPITVYKLLAEDWPFGVEMCKLVPFIQKASVGITVLSLCALSIDRYRAVASWSRIKGIGVPKWTAVEIVLIWVVSVVLAVPEAVGFDMITIDYKGRYLRICLLHPTQKTAFMQFYKTAKDWWLFSFYFCLPLAITAFFYTLMTCEMLRKKSGMQIALNDHLKQRREVAKTVFCLVLVFALCWLPLHLSRILKLTIYDQNDPNRCELLSFLLVLDYIGINMASLNSCINPIALYLVSKRFKNCFKSCLCCWCQSFEEKQSLEEKQSCLKFKANDHGYDNFRSSNKYSSS.

The N-terminal stretch at 1 to 26 is a signal peptide; that stretch reads MQPPPSLCGRALVALVLACGLSRIWG. Over 27–101 the chain is Extracellular; sequence EERGFPPDRA…GSIEIKETFK (75 aa). A glycan (N-linked (GlcNAc...) asparagine) is linked at Asn59. Positions 69–88 are disordered; sequence AEVPKGDRTAGSPPRTISPP. A helical membrane pass occupies residues 102-126; the sequence is YINTVVSCLVFVLGIIGNSTLLRII. Topologically, residues 127–137 are cytoplasmic; that stretch reads YKNKCMRNGPN. A helical membrane pass occupies residues 138 to 163; that stretch reads ILIASLALGDLLHIIIDIPITVYKLL. The Extracellular portion of the chain corresponds to 164–175; it reads AEDWPFGVEMCK. A disulfide bond links Cys174 and Cys255. Residues 176–197 traverse the membrane as a helical segment; the sequence is LVPFIQKASVGITVLSLCALSI. Topologically, residues 198 to 218 are cytoplasmic; sequence DRYRAVASWSRIKGIGVPKWT. The chain crosses the membrane as a helical span at residues 219–243; it reads AVEIVLIWVVSVVLAVPEAVGFDMI. The Extracellular portion of the chain corresponds to 244-271; sequence TIDYKGRYLRICLLHPTQKTAFMQFYKT. A helical membrane pass occupies residues 272 to 296; the sequence is AKDWWLFSFYFCLPLAITAFFYTLM. The Cytoplasmic portion of the chain corresponds to 297–324; the sequence is TCEMLRKKSGMQIALNDHLKQRREVAKT. Position 305 is a phosphoserine (Ser305). The helical transmembrane segment at 325–350 threads the bilayer; that stretch reads VFCLVLVFALCWLPLHLSRILKLTIY. The Extracellular segment spans residues 351–362; sequence DQNDPNRCELLS. Residues 363 to 389 form a helical membrane-spanning segment; that stretch reads FLLVLDYIGINMASLNSCINPIALYLV. The Cytoplasmic portion of the chain corresponds to 390–442; sequence SKRFKNCFKSCLCCWCQSFEEKQSLEEKQSCLKFKANDHGYDNFRSSNKYSSS. 3 S-palmitoyl cysteine lipidation sites follow: Cys402, Cys403, and Cys405. At Ser419 the chain carries Phosphoserine. At Tyr439 the chain carries Phosphotyrosine. A phosphoserine mark is found at Ser440, Ser441, and Ser442.

The protein belongs to the G-protein coupled receptor 1 family. Endothelin receptor subfamily. EDNRB sub-subfamily.

The protein resides in the cell membrane. Non-specific receptor for endothelin 1, 2, and 3. Mediates its action by association with G proteins that activate a phosphatidylinositol-calcium second messenger system. This is Endothelin receptor type B (EDNRB) from Canis lupus familiaris (Dog).